A 356-amino-acid chain; its full sequence is tRNA N6-adenosine threonylcarbamoyltransferase (356 aa).

Residues His115 and His119 each contribute to the Fe cation site. Substrate contacts are provided by residues 138 to 142 (LVSGG), Asp171, Gly184, and Asn283. Position 311 (Asp311) interacts with Fe cation.

This sequence belongs to the KAE1 / TsaD family. It depends on Fe(2+) as a cofactor.

It localises to the cytoplasm. It carries out the reaction L-threonylcarbamoyladenylate + adenosine(37) in tRNA = N(6)-L-threonylcarbamoyladenosine(37) in tRNA + AMP + H(+). In terms of biological role, required for the formation of a threonylcarbamoyl group on adenosine at position 37 (t(6)A37) in tRNAs that read codons beginning with adenine. Is involved in the transfer of the threonylcarbamoyl moiety of threonylcarbamoyl-AMP (TC-AMP) to the N6 group of A37, together with TsaE and TsaB. TsaD likely plays a direct catalytic role in this reaction. This is tRNA N6-adenosine threonylcarbamoyltransferase from Prochlorococcus marinus (strain NATL1A).